Reading from the N-terminus, the 290-residue chain is Acetyl-coenzyme A carboxylase carboxyl transferase subunit beta (290 aa).

The 263-residue stretch at 28–290 folds into the CoA carboxyltransferase N-terminal domain; sequence LMNKCSKCGT…TVREGLSHGG (263 aa). 4 residues coordinate Zn(2+): Cys-32, Cys-35, Cys-51, and Cys-54. The segment at 32–54 adopts a C4-type zinc-finger fold; it reads CSKCGTIQYSKELDKNLKVCSSC.

The protein belongs to the AccD/PCCB family. In terms of assembly, acetyl-CoA carboxylase is a heterohexamer composed of biotin carboxyl carrier protein (AccB), biotin carboxylase (AccC) and two subunits each of ACCase subunit alpha (AccA) and ACCase subunit beta (AccD). The cofactor is Zn(2+).

Its subcellular location is the cytoplasm. The catalysed reaction is N(6)-carboxybiotinyl-L-lysyl-[protein] + acetyl-CoA = N(6)-biotinyl-L-lysyl-[protein] + malonyl-CoA. It functions in the pathway lipid metabolism; malonyl-CoA biosynthesis; malonyl-CoA from acetyl-CoA: step 1/1. Component of the acetyl coenzyme A carboxylase (ACC) complex. Biotin carboxylase (BC) catalyzes the carboxylation of biotin on its carrier protein (BCCP) and then the CO(2) group is transferred by the transcarboxylase to acetyl-CoA to form malonyl-CoA. In Paenibacillus sp. (strain JDR-2), this protein is Acetyl-coenzyme A carboxylase carboxyl transferase subunit beta.